Here is a 122-residue protein sequence, read N- to C-terminus: MRWLLSILVRVVLVLCLCFAPLGIPVVARAAELPPVKHLDTPIDVNNTILRNYRQLPGFYPTLARILVKNAPYKSLEDMLQISGLTEQQKALIKANAENFVFGEYQEGANQLENRINQGYYG.

Residues 1–30 (MRWLLSILVRVVLVLCLCFAPLGIPVVARA) form the signal peptide.

It belongs to the PsbU family. PSII is composed of 1 copy each of membrane proteins PsbA, PsbB, PsbC, PsbD, PsbE, PsbF, PsbH, PsbI, PsbJ, PsbK, PsbL, PsbM, PsbT, PsbX, PsbY, PsbZ, Psb30/Ycf12, peripheral proteins PsbO, CyanoQ (PsbQ), PsbU, PsbV and a large number of cofactors. It forms dimeric complexes.

Its subcellular location is the cellular thylakoid membrane. Its function is as follows. One of the extrinsic, lumenal subunits of photosystem II (PSII). PSII is a light-driven water plastoquinone oxidoreductase, using light energy to abstract electrons from H(2)O, generating a proton gradient subsequently used for ATP formation. The extrinsic proteins stabilize the structure of photosystem II oxygen-evolving complex (OEC), the ion environment of oxygen evolution and protect the OEC against heat-induced inactivation. In Synechococcus sp. (strain JA-2-3B'a(2-13)) (Cyanobacteria bacterium Yellowstone B-Prime), this protein is Photosystem II extrinsic protein U.